Reading from the N-terminus, the 95-residue chain is Sec-independent protein translocase protein TatA (95 aa).

A helical membrane pass occupies residues 1–21; sequence MFGRLGAPEIILILVVIILLF. Residues 44 to 55 show a composition bias toward basic and acidic residues; the sequence is AKAMKSEAKADD. The disordered stretch occupies residues 44–95; sequence AKAMKSEAKADDAAPADPPNPEQSAAQRTIQAAPGDVTSSRPVTEPTDTTKR.

The protein belongs to the TatA/E family. The Tat system comprises two distinct complexes: a TatABC complex, containing multiple copies of TatA, TatB and TatC subunits, and a separate TatA complex, containing only TatA subunits. Substrates initially bind to the TatABC complex, which probably triggers association of the separate TatA complex to form the active translocon.

It is found in the cell membrane. Part of the twin-arginine translocation (Tat) system that transports large folded proteins containing a characteristic twin-arginine motif in their signal peptide across membranes. TatA could form the protein-conducting channel of the Tat system. The sequence is that of Sec-independent protein translocase protein TatA from Streptomyces coelicolor (strain ATCC BAA-471 / A3(2) / M145).